The following is a 677-amino-acid chain: Serine/threonine-protein kinase YPK2/YKR2 (677 aa).

A compositionally biased stretch (basic residues) spans 1 to 12 (MHSWRISKFKLG). Positions 1 to 115 (MHSWRISKFK…ETQGPSSESG (115 aa)) are disordered. Positions 41-56 (KHHDGSPKNHNHEHEH) are enriched in basic and acidic residues. Polar residues-rich tracts occupy residues 61 to 93 (INTN…NDNS) and 101 to 115 (SQSS…SESG). Phosphothreonine occurs at positions 63 and 66. The residue at position 72 (serine 72) is a Phosphoserine. One can recognise a Protein kinase domain in the interval 344-599 (FDLLKVIGKG…TDEIRNHPFF (256 aa)). ATP contacts are provided by residues 350 to 358 (IGKGSFGKV) and lysine 373. Residue aspartate 467 is the Proton acceptor of the active site. Threonine 499 carries the phosphothreonine modification. Threonine 501 is subject to Phosphothreonine; by PKH2. The 71-residue stretch at 600 to 670 (KDISWKKLLL…IGDEQLGDSP (71 aa)) folds into the AGC-kinase C-terminal domain. A Phosphoserine; by TOR2 modification is found at serine 641. Serine 650 bears the Phosphoserine mark. Residue threonine 659 is modified to Phosphothreonine; by TOR2. Position 669 is a phosphoserine (serine 669).

The protein belongs to the protein kinase superfamily. AGC Ser/Thr protein kinase family. RAC subfamily. In terms of processing, autophosphorylated. Phosphorylated by PKH2 and TOR2.

Its subcellular location is the cytoplasm. It catalyses the reaction L-seryl-[protein] + ATP = O-phospho-L-seryl-[protein] + ADP + H(+). The enzyme catalyses L-threonyl-[protein] + ATP = O-phospho-L-threonyl-[protein] + ADP + H(+). With respect to regulation, activated by phytosphingosine (PHS), a sphingoid long chain base. Activated by PKH2 phosphorylation. Kinase activity is regulated by TOR2 via direct phosphorylation of Ser-641 and Thr-659. Its function is as follows. Plays an essential role in the proliferation of yeast cells. Involved in a signaling pathway, required for optimal cell wall integrity, that acts in parallel with the PKC1-SLT2-dependent pathway. A substrate of TOR complex 2 (TORC2) and required for TORC2 to regulate spatial aspects of cell growth. Phosphorylation of residue Thr-501 is indispensable for function. May act as a downstream kinase in the sphingolipid-mediated signaling pathway. This is Serine/threonine-protein kinase YPK2/YKR2 (YPK2) from Saccharomyces cerevisiae (strain ATCC 204508 / S288c) (Baker's yeast).